The sequence spans 69 residues: Conotoxin Eb6.14 (69 aa).

Residues 1 to 17 (VLIIAVLFLTACQLTTA) form the signal peptide. A propeptide spanning residues 18-41 (ETYSRGRQKHRARRSTDKNSKWTR) is cleaved from the precursor. 3 cysteine pairs are disulfide-bonded: cysteine 43-cysteine 57, cysteine 50-cysteine 61, and cysteine 56-cysteine 68.

This sequence belongs to the conotoxin O1 superfamily. In terms of tissue distribution, expressed by the venom duct.

It localises to the secreted. This chain is Conotoxin Eb6.14 (E1), found in Conus ebraeus (Hebrew cone).